Reading from the N-terminus, the 908-residue chain is Protein translocase subunit SecA (908 aa).

ATP contacts are provided by residues Q87, 105 to 109 (GEGKT), and D512. The interval 865 to 908 (GGDDGSDEMMAHTPMIRDGDKVGRNDPCPCGSGRKYKQCHGKLS) is disordered. Residues 879–888 (MIRDGDKVGR) show a composition bias toward basic and acidic residues. Positions 892, 894, 903, and 904 each coordinate Zn(2+). Residues 898-908 (RKYKQCHGKLS) are compositionally biased toward basic residues.

Belongs to the SecA family. As to quaternary structure, monomer and homodimer. Part of the essential Sec protein translocation apparatus which comprises SecA, SecYEG and auxiliary proteins SecDF-YajC and YidC. Zn(2+) serves as cofactor.

It localises to the cell inner membrane. The protein localises to the cytoplasm. The enzyme catalyses ATP + H2O + cellular proteinSide 1 = ADP + phosphate + cellular proteinSide 2.. Its function is as follows. Part of the Sec protein translocase complex. Interacts with the SecYEG preprotein conducting channel. Has a central role in coupling the hydrolysis of ATP to the transfer of proteins into and across the cell membrane, serving both as a receptor for the preprotein-SecB complex and as an ATP-driven molecular motor driving the stepwise translocation of polypeptide chains across the membrane. This chain is Protein translocase subunit SecA, found in Shewanella sp. (strain ANA-3).